We begin with the raw amino-acid sequence, 376 residues long: Methylthioribose-1-phosphate isomerase (376 aa).

The Proton donor role is filled by Asp256.

Belongs to the eIF-2B alpha/beta/delta subunits family. MtnA subfamily.

It is found in the cytoplasm. Its subcellular location is the nucleus. It carries out the reaction 5-(methylsulfanyl)-alpha-D-ribose 1-phosphate = 5-(methylsulfanyl)-D-ribulose 1-phosphate. It functions in the pathway amino-acid biosynthesis; L-methionine biosynthesis via salvage pathway; L-methionine from S-methyl-5-thio-alpha-D-ribose 1-phosphate: step 1/6. Functionally, catalyzes the interconversion of methylthioribose-1-phosphate (MTR-1-P) into methylthioribulose-1-phosphate (MTRu-1-P). This is Methylthioribose-1-phosphate isomerase from Vitis vinifera (Grape).